Here is a 143-residue protein sequence, read N- to C-terminus: Small ribosomal subunit protein uS12 (143 aa).

Residues 1–20 (MGKCRGLRTARKLRSHRRDH) are compositionally biased toward basic residues. A disordered region spans residues 1 to 26 (MGKCRGLRTARKLRSHRRDHKWHDKQ). A Glycyl lysine isopeptide (Lys-Gly) (interchain with G-Cter in SUMO2) cross-link involves residue K37. K54 carries the post-translational modification N6-succinyllysine. P62 is modified (3-hydroxyproline). The residue at position 135 (K135) is an N6-acetyllysine.

This sequence belongs to the universal ribosomal protein uS12 family. Component of the 40S small ribosomal subunit. Part of the small subunit (SSU) processome, composed of more than 70 proteins and the RNA chaperone small nucleolar RNA (snoRNA) U3. As to quaternary structure, (Microbial infection) Interacts with the African swine fever virus (ASFV) ubiquitin-conjugating enzyme UBCv1; this interaction probably plays a role in the viral regulation of host protein synthesis. In terms of processing, hydroxylation at Pro-62 affects translation termination efficiency.

The protein resides in the cytoplasm. The protein localises to the cytosol. It is found in the rough endoplasmic reticulum. Its subcellular location is the nucleus. It localises to the nucleolus. Functionally, component of the ribosome, a large ribonucleoprotein complex responsible for the synthesis of proteins in the cell. The small ribosomal subunit (SSU) binds messenger RNAs (mRNAs) and translates the encoded message by selecting cognate aminoacyl-transfer RNA (tRNA) molecules. The large subunit (LSU) contains the ribosomal catalytic site termed the peptidyl transferase center (PTC), which catalyzes the formation of peptide bonds, thereby polymerizing the amino acids delivered by tRNAs into a polypeptide chain. The nascent polypeptides leave the ribosome through a tunnel in the LSU and interact with protein factors that function in enzymatic processing, targeting, and the membrane insertion of nascent chains at the exit of the ribosomal tunnel. Plays an important role in translational accuracy. Part of the small subunit (SSU) processome, first precursor of the small eukaryotic ribosomal subunit. During the assembly of the SSU processome in the nucleolus, many ribosome biogenesis factors, an RNA chaperone and ribosomal proteins associate with the nascent pre-rRNA and work in concert to generate RNA folding, modifications, rearrangements and cleavage as well as targeted degradation of pre-ribosomal RNA by the RNA exosome. The protein is Small ribosomal subunit protein uS12 (RPS23) of Sus scrofa (Pig).